The chain runs to 85 residues: Turripeptide PaIAa (85 aa).

This sequence belongs to the turripeptide family. In terms of tissue distribution, expressed by the venom duct.

Its subcellular location is the secreted. Functionally, is lethal to drosophila larvae. In Polystira albida (White giant-turris), this protein is Turripeptide PaIAa.